Here is a 121-residue protein sequence, read N- to C-terminus: Oxalate-binding protein (121 aa).

Residues R49–V117 form the Cupin type-2 domain. Mn(2+)-binding residues include H61, H63, and E68. Y70 provides a ligand contact to oxalate. H102 contributes to the Mn(2+) binding site.

In terms of assembly, homodimer.

In terms of biological role, binds oxalate. This Thermotoga maritima (strain ATCC 43589 / DSM 3109 / JCM 10099 / NBRC 100826 / MSB8) protein is Oxalate-binding protein.